The sequence spans 547 residues: Elongator complex protein 3 (547 aa).

The region spanning 82 to 372 is the Radical SAM core domain; the sequence is RTASGIAVVA…YRVQRDIPMP (291 aa). The [4Fe-4S] cluster site is built by cysteine 99, cysteine 109, and cysteine 112. Serine 161 bears the Phosphoserine mark. Lysine 164 lines the acetyl-CoA pocket. At tyrosine 202 the chain carries Phosphotyrosine. Lysine 229 is modified (N6-methyllysine). Tyrosine 251 carries the phosphotyrosine modification. In terms of domain architecture, N-acetyltransferase spans 396–547; the sequence is IQCRDVRTRE…QGPYMVKTLE (152 aa). Acetyl-CoA-binding positions include 474 to 477, 497 to 499, and tyrosine 530; these read ELHV and FGM.

The protein belongs to the ELP3 family. Component of the elongator complex which consists of ELP1, ELP2, ELP3, ELP4, ELP5 and ELP6. ELP1, ELP2 and ELP3 form the elongator core complex. Interacts with alpha-tubulin. The cofactor is [4Fe-4S] cluster. Post-translationally, tyrosine-phosphorylated; phosphorylation on Tyr-202 does not affect elongator complex integrity or ELP3 protein stability. Also serine/threonine-phosphorylated.

Its subcellular location is the cytoplasm. It is found in the nucleus. It catalyses the reaction uridine(34) in tRNA + acetyl-CoA + S-adenosyl-L-methionine + H2O = 5-(carboxymethyl)uridine(34) in tRNA + 5'-deoxyadenosine + L-methionine + CoA + 2 H(+). It participates in tRNA modification; 5-methoxycarbonylmethyl-2-thiouridine-tRNA biosynthesis. In terms of biological role, catalytic tRNA acetyltransferase subunit of the elongator complex which is required for multiple tRNA modifications, including mcm5U (5-methoxycarbonylmethyl uridine), mcm5s2U (5-methoxycarbonylmethyl-2-thiouridine), and ncm5U (5-carbamoylmethyl uridine). In the elongator complex, acts as a tRNA uridine(34) acetyltransferase by mediating formation of carboxymethyluridine in the wobble base at position 34 in tRNAs. May also act as a protein lysine acetyltransferase by mediating acetylation of target proteins; such activity is however unclear in vivo and recent evidences suggest that ELP3 primarily acts as a tRNA acetyltransferase. Involved in neurogenesis: regulates the migration and branching of projection neurons in the developing cerebral cortex, through a process depending on alpha-tubulin acetylation. Required for acetylation of GJA1 in the developing cerebral cortex. This Bos taurus (Bovine) protein is Elongator complex protein 3.